The primary structure comprises 413 residues: Inactive serine protease 35 (413 aa).

The first 16 residues, 1 to 16, serve as a signal peptide directing secretion; the sequence is MENMLLWLIFFTPGWT. N-linked (GlcNAc...) asparagine glycosylation is present at N90. The Peptidase S1 domain occupies 124 to 408; the sequence is VYGTDSRFSI…ICLWIHGNDA (285 aa). A disulfide bridge connects residues C154 and C170. Basic residues predominate over residues 191 to 207; sequence MRNKSGGKKRRGSKRSR. Residues 191-250 are disordered; that stretch reads MRNKSGGKKRRGSKRSRREASGGDQREGTREHLRERAKGGRRRKKSGRGQRIAEGRPSFQ. Basic and acidic residues predominate over residues 208–228; it reads REASGGDQREGTREHLRERAK. The span at 229 to 238 shows a compositional bias: basic residues; that stretch reads GGRRRKKSGR.

It belongs to the peptidase S1 family.

The protein resides in the secreted. This Homo sapiens (Human) protein is Inactive serine protease 35 (PRSS35).